A 312-amino-acid chain; its full sequence is MFEHETVLKWESIKGLNIKPDGIYVDCTLGGAGHSEEIVKQLTTGHLYAFDQDDVALAHAAERLAAYEGRFTLIKSNFVHLKEELEARSVTKVDGILFDLGVSSPQLDEGERGFSYNFDARLDMRMDQTSPLSAYEVVNEWPYNDLVRILFTYGEEKFSKQIARKIEKAREIAPIETTFELVELIKDAIPAPARRKGGHPAKRTFQAIRIAVNDELNVFDRAVYQAIDLLAVGGRLCVITFHSLEDRMCKQAFKEKSSLPELPQGLPMIPKEFEPELRLVTRKPITAGDDELDDNRRSRSAKLRIVEKMKES.

S-adenosyl-L-methionine is bound by residues 32-34, Asp-51, Phe-78, Asp-99, and Gln-106; that span reads AGH.

It belongs to the methyltransferase superfamily. RsmH family.

It is found in the cytoplasm. The catalysed reaction is cytidine(1402) in 16S rRNA + S-adenosyl-L-methionine = N(4)-methylcytidine(1402) in 16S rRNA + S-adenosyl-L-homocysteine + H(+). Specifically methylates the N4 position of cytidine in position 1402 (C1402) of 16S rRNA. The sequence is that of Ribosomal RNA small subunit methyltransferase H from Exiguobacterium sibiricum (strain DSM 17290 / CCUG 55495 / CIP 109462 / JCM 13490 / 255-15).